We begin with the raw amino-acid sequence, 97 residues long: Na(+)/H(+) antiporter subunit F1 (97 aa).

Transmembrane regions (helical) follow at residues histidine 3 to isoleucine 23, valine 35 to leucine 55, and tyrosine 60 to serine 80.

It belongs to the CPA3 antiporters (TC 2.A.63) subunit F family. As to quaternary structure, may form a heterooligomeric complex that consists of seven subunits: mnhA1, mnhB1, mnhC1, mnhD1, mnhE1, mnhF1 and mnhG1.

The protein resides in the cell membrane. Its function is as follows. Mnh complex is a Na(+)/H(+) antiporter involved in Na(+) excretion. The protein is Na(+)/H(+) antiporter subunit F1 (mnhF1) of Staphylococcus aureus (strain Mu3 / ATCC 700698).